Consider the following 387-residue polypeptide: Anhydro-N-acetylmuramic acid kinase (387 aa).

9–16 (GTSADGVD) is an ATP binding site.

Belongs to the anhydro-N-acetylmuramic acid kinase family.

It catalyses the reaction 1,6-anhydro-N-acetyl-beta-muramate + ATP + H2O = N-acetyl-D-muramate 6-phosphate + ADP + H(+). Its pathway is amino-sugar metabolism; 1,6-anhydro-N-acetylmuramate degradation. The protein operates within cell wall biogenesis; peptidoglycan recycling. Catalyzes the specific phosphorylation of 1,6-anhydro-N-acetylmuramic acid (anhMurNAc) with the simultaneous cleavage of the 1,6-anhydro ring, generating MurNAc-6-P. Is required for the utilization of anhMurNAc either imported from the medium or derived from its own cell wall murein, and thus plays a role in cell wall recycling. The protein is Anhydro-N-acetylmuramic acid kinase of Synechococcus sp. (strain WH7803).